Reading from the N-terminus, the 281-residue chain is Beta-lactamase (281 aa).

Residues 1–24 form the signal peptide; the sequence is MKKLIFLIVIALVLSACNSNSSHA. S63 acts as the Acyl-ester intermediate in catalysis. 225–227 is a binding site for substrate; it reads KSG.

This sequence belongs to the class-A beta-lactamase family.

It catalyses the reaction a beta-lactam + H2O = a substituted beta-amino acid. This chain is Beta-lactamase (blaZ), found in Staphylococcus aureus.